Reading from the N-terminus, the 53-residue chain is MLSWAITFLIIAIVAAVLGFGGIAGAATGIAKILFIIFLVLFVASFFFGRGRG.

2 helical membrane passes run 4–24 (WAIT…GGIA) and 29–49 (GIAK…FFFG).

Belongs to the UPF0391 family.

The protein localises to the cell membrane. The sequence is that of UPF0391 membrane protein PSEEN0090 from Pseudomonas entomophila (strain L48).